A 266-amino-acid polypeptide reads, in one-letter code: Glucosamine-6-phosphate deaminase (266 aa).

Aspartate 72 serves as the catalytic Proton acceptor; for enolization step. The active-site For ring-opening step is aspartate 141. Histidine 143 serves as the catalytic Proton acceptor; for ring-opening step. Glutamate 148 acts as the For ring-opening step in catalysis.

It belongs to the glucosamine/galactosamine-6-phosphate isomerase family. NagB subfamily. As to quaternary structure, homohexamer.

The enzyme catalyses alpha-D-glucosamine 6-phosphate + H2O = beta-D-fructose 6-phosphate + NH4(+). The protein operates within amino-sugar metabolism; N-acetylneuraminate degradation; D-fructose 6-phosphate from N-acetylneuraminate: step 5/5. With respect to regulation, allosterically activated by N-acetylglucosamine 6-phosphate (GlcNAc6P). Its function is as follows. Catalyzes the reversible isomerization-deamination of glucosamine 6-phosphate (GlcN6P) to form fructose 6-phosphate (Fru6P) and ammonium ion. The chain is Glucosamine-6-phosphate deaminase from Yersinia enterocolitica serotype O:8 / biotype 1B (strain NCTC 13174 / 8081).